Consider the following 399-residue polypeptide: ATP-dependent RNA helicase FAL1 (399 aa).

A Q motif motif is present at residues 26–54 (RTFESMRLKPELLKGIYAYGFEAPSAIQS). The Helicase ATP-binding domain occupies 57–227 (IMQIISGRDT…GKFTTDPVKI (171 aa)). ATP is bound at residue 70 to 77 (AQSGTGKT). Residues 175–178 (DEAD) carry the DEAD box motif. The Helicase C-terminal domain maps to 238–399 (GIKQYYIQCE…EMPSNVNDVM (162 aa)).

Belongs to the DEAD box helicase family. DDX48/FAL1 subfamily.

Its subcellular location is the nucleus. It localises to the nucleolus. The catalysed reaction is ATP + H2O = ADP + phosphate + H(+). In terms of biological role, ATP-dependent RNA helicase involved in 40S ribosomal subunit biogenesis. Required for the processing and cleavage of 35S pre-rRNA at sites A0, A1, and A2, leading to mature 18S rRNA. The protein is ATP-dependent RNA helicase FAL1 (FAL1) of Lodderomyces elongisporus (strain ATCC 11503 / CBS 2605 / JCM 1781 / NBRC 1676 / NRRL YB-4239) (Yeast).